A 443-amino-acid chain; its full sequence is UDP-N-acetylmuramate--L-alanine ligase (443 aa).

G110 to S116 is a binding site for ATP.

The protein belongs to the MurCDEF family.

The protein resides in the cytoplasm. The enzyme catalyses UDP-N-acetyl-alpha-D-muramate + L-alanine + ATP = UDP-N-acetyl-alpha-D-muramoyl-L-alanine + ADP + phosphate + H(+). The protein operates within cell wall biogenesis; peptidoglycan biosynthesis. Functionally, cell wall formation. This Lactococcus lactis subsp. cremoris (strain MG1363) protein is UDP-N-acetylmuramate--L-alanine ligase.